The sequence spans 441 residues: UDP-N-acetylmuramoylalanine--D-glutamate ligase (441 aa).

113–119 serves as a coordination point for ATP; it reads GSNAKST.

Belongs to the MurCDEF family.

It localises to the cytoplasm. The enzyme catalyses UDP-N-acetyl-alpha-D-muramoyl-L-alanine + D-glutamate + ATP = UDP-N-acetyl-alpha-D-muramoyl-L-alanyl-D-glutamate + ADP + phosphate + H(+). It participates in cell wall biogenesis; peptidoglycan biosynthesis. In terms of biological role, cell wall formation. Catalyzes the addition of glutamate to the nucleotide precursor UDP-N-acetylmuramoyl-L-alanine (UMA). The sequence is that of UDP-N-acetylmuramoylalanine--D-glutamate ligase from Alcanivorax borkumensis (strain ATCC 700651 / DSM 11573 / NCIMB 13689 / SK2).